The sequence spans 1131 residues: Probable secreted beta-glucosidase adg3 (1131 aa).

A signal peptide spans 1-23 (MPSKIEKICLLLLGFTAASNVNA). Asparagine 58, asparagine 123, asparagine 252, asparagine 551, asparagine 593, asparagine 631, and asparagine 689 each carry an N-linked (GlcNAc...) asparagine glycan. The segment at 609 to 819 (GTTSSTSEIV…SSPISSNSVT (211 aa)) is disordered. Residues 623–715 (SNSNTGSLNG…YSDPTTTITS (93 aa)) show a composition bias toward low complexity. A compositionally biased stretch (polar residues) spans 716 to 725 (EVSSILSSPT). Positions 726–737 (SMQSSVSRPQSS) are enriched in low complexity. Residues 738–763 (GDASGFNTIFTSISQSSDGETSGYTI) are compositionally biased toward polar residues. 2 stretches are compositionally biased toward low complexity: residues 764-773 (SSNSSQNSAS) and 780-819 (TSSS…NSVT). N-linked (GlcNAc...) asparagine glycans are attached at residues asparagine 766, asparagine 806, and asparagine 857. Low complexity predominate over residues 893 to 909 (STSNSGSTSYSIPSSSS). Residues 893–918 (STSNSGSTSYSIPSSSSRNEGTTSYS) are disordered. Asparagine 920 carries an N-linked (GlcNAc...) asparagine glycan. Residues 977–1027 (LTVKPESSLSSSTTSGLTSSSSTIPSSTRSESNSESASTSSASKRSSSSTS) are compositionally biased toward low complexity. Positions 977–1031 (LTVKPESSLSSSTTSGLTSSSSTIPSSTRSESNSESASTSSASKRSSSSTSLVQS) are disordered.

It belongs to the SUN family.

The protein localises to the secreted. Cell surface beta-glucosidase involved in cell wall biogenesis,. The chain is Probable secreted beta-glucosidase adg3 (adg3) from Schizosaccharomyces pombe (strain 972 / ATCC 24843) (Fission yeast).